Consider the following 288-residue polypeptide: Protein PGR (288 aa).

7 helical membrane passes run 1 to 21, 29 to 49, 91 to 111, 123 to 143, 177 to 197, 210 to 230, and 268 to 288; these read METS…LIAF, LDLS…TAGF, VLCN…LTGW, IVTA…GDTW, LLAA…FGLF, LLVI…DSIL, and VNFV…VYIF.

Belongs to the TMEM19 family. As to expression, expressed in the vasculature of leaves, roots, inflorescences, siliques, anther filaments and sepals. Detected primarily in the phloem tissues, including in the root ans shoot apical meristems.

The protein resides in the cell membrane. In terms of biological role, involved in the glucose-triggered developmental leaf growth process. This is Protein PGR from Arabidopsis thaliana (Mouse-ear cress).